Reading from the N-terminus, the 212-residue chain is Adenylate kinase (212 aa).

10–15 contributes to the ATP binding site; that stretch reads GAGKGT. The segment at 30-59 is NMP; it reads STGDMFRAAMANQTEMGRLAKSYIDKGELV. AMP is bound by residues T31, R36, 57-59, 86-89, and Q93; these read ELV and GYPR. The tract at residues 127-159 is LID; that stretch reads GRIINRKTGETFHKVFNPPVDYKEEDYYQREDD. ATP is bound by residues R128 and 137 to 138; that span reads TF. Residues R156 and R167 each contribute to the AMP site. Q195 is a binding site for ATP.

This sequence belongs to the adenylate kinase family. In terms of assembly, monomer.

Its subcellular location is the cytoplasm. It carries out the reaction AMP + ATP = 2 ADP. It participates in purine metabolism; AMP biosynthesis via salvage pathway; AMP from ADP: step 1/1. In terms of biological role, catalyzes the reversible transfer of the terminal phosphate group between ATP and AMP. Plays an important role in cellular energy homeostasis and in adenine nucleotide metabolism. The protein is Adenylate kinase of Streptococcus agalactiae serotype III (strain NEM316).